We begin with the raw amino-acid sequence, 67 residues long: Stomoxyn (67 aa).

A signal peptide spans Met-1–Ala-24. A Threonine amide modification is found at Thr-66.

As to expression, constitutively expressed in the adult anterior midgut; proventriculus, thoracic and reservoir regions.

Its subcellular location is the secreted. In terms of biological role, has antimicrobial activity against most Gram-positive and Gram-negative bacteria, filamentous fungi and yeasts tested. Has trypanolytic effect on T.b.rhodesiense and limited hemolytic activity against bovine red blood cells. May play an important role in protecting the stored blood in the anterior midgut from microorganisms prior to digestion. Adopts an amphipathic alpha-helical structure only in the presence of an organic solvent that mimics a phospholipid membrane. The chain is Stomoxyn from Stomoxys calcitrans (Stable fly).